The sequence spans 549 residues: Polymorphic pseudokinase ROP5 (549 aa).

The signal sequence occupies residues Met-1–Ala-24. A Protein kinase domain is found at Leu-234–Leu-527. Arg-241, Asp-244, Arg-245, Ser-246, Lys-263, Met-337, Pro-338, Ala-340, Asp-343, and Asp-393 together coordinate ATP. An ADP-binding site is contributed by Asp-244. ADP-binding residues include Ser-246, Lys-263, Met-337, Pro-338, and Ala-340. Asp-393 lines the ADP pocket. 2 residues coordinate Mg(2+): Asp-393 and Asp-407. A glycan (N-linked (GlcNAc...) asparagine) is linked at Asn-434. Cys-458 and Cys-492 form a disulfide bridge.

Belongs to the protein kinase superfamily. Ser/Thr protein kinase family. In terms of assembly, component of a complex at least composed of ROP18 and ROP5. Interacts with GRA7. Interacts with ROP17. Interacts with mouse IRGA6/IIGP1; the interaction results in inhibition of IRGA6/IIGP1 GTPase activity and/or oligomerization.

It localises to the secreted. The protein localises to the parasitophorous vacuole. Its subcellular location is the cytoplasmic vesicle. It is found in the secretory vesicle. The protein resides in the rhoptry. Its function is as follows. Pseudokinase. Essential for virulence in the type I lineage. Mediates parasite survival in mouse monocytes. Required for the parasite ability to resist mouse innate immune effectors triggered by the IFN-gamma (IFNG). Reduces the accumulation of mouse IRGA6 (IIGP1) and IRGB6 (TGTP1/TGTP2), immunity-related GTPases (IRGs) that protect mice from infection by certain intracellular pathogens, on the parasitophorous vacuole and IRG-mediated killing of parasites by mouse cells. Regulates the activity of ROP18, an active kinase that targets IRGs to prevent IRG-mediated parasite killing by mouse cells. Acts as an allosteric inhibitor of mouse IRGA6 (IIGP1). Does not affect IFN-gamma (IFNG)-mediated parasite killing in human cells that do not possess the large variety of IRGs. The polypeptide is Polymorphic pseudokinase ROP5 (Toxoplasma gondii).